Reading from the N-terminus, the 425-residue chain is Kynurenine/alpha-aminoadipate aminotransferase, mitochondrial (425 aa).

The N-terminal 29 residues, 1–29 (MNYARFITATSAARKPSTIRVMTEILSKA), are a transit peptide targeting the mitochondrion. Arg-20 provides a ligand contact to substrate. An N6-acetyllysine modification is found at Lys-69. 2 residues coordinate substrate: Tyr-74 and Tyr-142. Positions 178–208 (WKPEDSKNPKKNSPKFLYTVPNGNNPSGNSL) are disordered. Position 179 is an N6-acetyllysine (Lys-179). Polar residues predominate over residues 198 to 208 (PNGNNPSGNSL). Residue Asn-202 coordinates substrate. Lys-263 is modified (N6-(pyridoxal phosphate)lysine; alternate). N6-acetyllysine; alternate is present on residues Lys-263 and Lys-339. N6-succinyllysine; alternate is present on residues Lys-263 and Lys-339. Arg-399 is a substrate binding site. Position 422 is an N6-acetyllysine (Lys-422).

This sequence belongs to the class-I pyridoxal-phosphate-dependent aminotransferase family. In terms of assembly, homodimer. Pyridoxal 5'-phosphate serves as cofactor.

It localises to the mitochondrion. The catalysed reaction is L-kynurenine + 2-oxoglutarate = kynurenate + L-glutamate + H2O. It catalyses the reaction L-2-aminoadipate + 2-oxoglutarate = 2-oxoadipate + L-glutamate. The enzyme catalyses glycine + 2-oxoglutarate = glyoxylate + L-glutamate. It carries out the reaction L-kynurenine + glyoxylate = kynurenate + glycine + H2O. The catalysed reaction is 3-hydroxy-L-kynurenine + glyoxylate = xanthurenate + glycine + H2O. It catalyses the reaction 2-oxohexanoate + L-kynurenine = L-2-aminohexanoate + kynurenate + H2O. The enzyme catalyses 3-phenylpyruvate + L-kynurenine = kynurenate + L-phenylalanine + H2O. It carries out the reaction 4-methylsulfanyl-2-oxobutanoate + L-kynurenine = kynurenate + L-methionine + H2O. The catalysed reaction is 2-oxo-3-sulfanylpropanoate + L-kynurenine = kynurenate + L-cysteine + H2O. It catalyses the reaction indole-3-pyruvate + L-kynurenine = kynurenate + L-tryptophan + H2O. The enzyme catalyses 2-oxopentanoate + L-kynurenine = L-2-aminopentanoate + kynurenate + H2O. It carries out the reaction 4-methyl-2-oxopentanoate + L-kynurenine = kynurenate + L-leucine + H2O. The catalysed reaction is glyoxylate + L-methionine = 4-methylsulfanyl-2-oxobutanoate + glycine. It catalyses the reaction L-2-aminoadipate + glyoxylate = 2-oxoadipate + glycine. The enzyme catalyses L-tyrosine + glyoxylate = 3-(4-hydroxyphenyl)pyruvate + glycine. It carries out the reaction glyoxylate + L-phenylalanine = 3-phenylpyruvate + glycine. The catalysed reaction is L-tryptophan + glyoxylate = indole-3-pyruvate + glycine. It catalyses the reaction L-leucine + glyoxylate = 4-methyl-2-oxopentanoate + glycine. The enzyme catalyses 2-oxobutanoate + L-kynurenine = (2S)-2-aminobutanoate + kynurenate + H2O. It carries out the reaction 2-oxoadipate + L-kynurenine = L-2-aminoadipate + kynurenate + H2O. Its pathway is amino-acid degradation; L-lysine degradation via saccharopine pathway; glutaryl-CoA from L-lysine: step 4/6. Functionally, transaminase with broad substrate specificity. Has transaminase activity towards aminoadipate, kynurenine, methionine and glutamate. Shows activity also towards tryptophan, aspartate and hydroxykynurenine. Accepts a variety of oxo-acids as amino-group acceptors, with a preference for 2-oxoglutarate, 2-oxocaproic acid, phenylpyruvate and alpha-oxo-gamma-methiol butyric acid. Can also use glyoxylate as amino-group acceptor (in vitro). The sequence is that of Kynurenine/alpha-aminoadipate aminotransferase, mitochondrial from Bos taurus (Bovine).